We begin with the raw amino-acid sequence, 293 residues long: NAD kinase (293 aa).

The Proton acceptor role is filled by D74. Residues 74–75 (DG), R79, 148–149 (NE), R176, D178, 189–194 (TAYALS), and Q248 contribute to the NAD(+) site.

Belongs to the NAD kinase family. The cofactor is a divalent metal cation.

It is found in the cytoplasm. It catalyses the reaction NAD(+) + ATP = ADP + NADP(+) + H(+). Involved in the regulation of the intracellular balance of NAD and NADP, and is a key enzyme in the biosynthesis of NADP. Catalyzes specifically the phosphorylation on 2'-hydroxyl of the adenosine moiety of NAD to yield NADP. The polypeptide is NAD kinase (Blochmanniella floridana).